Here is a 579-residue protein sequence, read N- to C-terminus: Glutamine--tRNA ligase (579 aa).

The 'HIGH' region signature appears at proline 41 to histidine 51. ATP contacts are provided by residues glutamate 42–asparagine 44 and histidine 48–alanine 54. L-glutamine-binding residues include aspartate 74 and tyrosine 218. ATP is bound by residues threonine 237, arginine 285–leucine 286, and methionine 293–lysine 295. Residues valine 292 to arginine 296 carry the 'KMSKS' region motif.

It belongs to the class-I aminoacyl-tRNA synthetase family. As to quaternary structure, monomer.

It localises to the cytoplasm. The catalysed reaction is tRNA(Gln) + L-glutamine + ATP = L-glutaminyl-tRNA(Gln) + AMP + diphosphate. The sequence is that of Glutamine--tRNA ligase from Xanthomonas campestris pv. campestris (strain 8004).